The chain runs to 112 residues: Large ribosomal subunit protein uL1 (112 aa).

The protein belongs to the universal ribosomal protein uL1 family.

This chain is Large ribosomal subunit protein uL1 (rpl-10a), found in Caenorhabditis remanei (Caenorhabditis vulgaris).